A 240-amino-acid chain; its full sequence is MLARTDSTNAEALKLAPGLSGSAWVLAREQFAGRGRRGREWVMPAGNFAGTLVLRPQGGALAAAQLSFVAALALYDALGLACGPAARLAIKWPNDVLLNGGKVAGILLESSGSGPGVQAVAVGIGVNLAGAPDAGAVEPGATPPVSVQGETGHAVDPEEFLDLLAPAFARWQAQLDTYGFAPIRNAWLARAARLGEPIIARTGTAESHGIFEGIDDSGALILRGPAGRQVIPAAEVFFGG.

Positions 1–176 (MLARTDSTNA…AFARWQAQLD (176 aa)) constitute a BPL/LPL catalytic domain. Biotin is bound by residues 7–9 (STN), glutamine 30, 34–36 (RGR), and lysine 102.

The protein belongs to the biotin--protein ligase family.

The enzyme catalyses biotin + L-lysyl-[protein] + ATP = N(6)-biotinyl-L-lysyl-[protein] + AMP + diphosphate + H(+). Activates biotin to form biotinyl-5'-adenylate and transfers the biotin moiety to biotin-accepting proteins. In Paracoccus denitrificans, this protein is Biotin--[acetyl-CoA-carboxylase] ligase (birA).